We begin with the raw amino-acid sequence, 307 residues long: Acyl transferase (307 aa).

Residues serine 116, aspartate 213, and histidine 243 each act as charge relay system in the active site.

This sequence belongs to the LuxD family.

Its pathway is lipid metabolism; fatty acid reduction for biolumincescence. Functionally, acyl transferase is part of the fatty acid reductase system required for aldehyde biosynthesis; it produces fatty acids for the luminescent reaction. The polypeptide is Acyl transferase (Aliivibrio fischeri (strain ATCC 700601 / ES114) (Vibrio fischeri)).